The primary structure comprises 39 residues: MQSIKTIRCTFCNKLLAKVGTVGYLEIKCPRCKVINFTK.

The protein belongs to the com family.

In Haemophilus influenzae (strain ATCC 51907 / DSM 11121 / KW20 / Rd), this protein is Mu-like prophage FluMu protein com.